Reading from the N-terminus, the 752-residue chain is Exocyst complex component EXO84B (752 aa).

2 disordered regions span residues 511–532 (QTGQRTDDLRRPLDRQNRNPEQ) and 724–752 (TKGNNGDVHSPTASVSAQSVSSARSHGSY). Positions 515–532 (RTDDLRRPLDRQNRNPEQ) are enriched in basic and acidic residues. Over residues 733–752 (SPTASVSAQSVSSARSHGSY) the composition is skewed to low complexity.

It belongs to the EXO84 family. In terms of assembly, the exocyst complex is composed of SEC3, SEC5, SEC6, SEC8, SEC10, EXO70A1 and EXO84B. Interacts with SEC6, SEC10, SEC15B and EXO70A1. Interacts with EXO70B1. Binds directly to B1L.

It is found in the cytoplasm. The protein localises to the cytosol. Its subcellular location is the perinuclear region. The protein resides in the cytoskeleton. It localises to the phragmoplast. It is found in the secreted. The protein localises to the cell wall. Its subcellular location is the cell membrane. Its function is as follows. Component of the exocyst complex involved in the docking of exocytic vesicles with fusion sites on the plasma membrane during regulated or polarized secretion. Involved in polarized cell growth and organ morphogenesis. During cytokinesis, involved in cell plate initiation, cell plate maturation and formation of new primary cell wall. Probable component of an exocyst subcomplex specifically involved in autophagy-related, Golgi-independent membrane traffic to the vacuole. Regulates autophagosome formation and autophagy-related Golgi-independent import into the vacuole. Mediates ABCG36/PEN3 outer-membrane polarity at the periphery of lateral root cap and root epidermal cells. The chain is Exocyst complex component EXO84B from Arabidopsis thaliana (Mouse-ear cress).